Reading from the N-terminus, the 442-residue chain is MSEKHKWWQQVENIDITHLGPKRKAYELLGRHEEQVLINRRDVMEKKDAWDVQEFITQMYIKQLLRHPAFQLLLAFLLLSNAITIALRTNSYLGQKHYELFSTIDDIVLTILICEVLLGWLNGFWIFWKDGWNILNFAIVFILFMGFFIKQLDMVAITYPLRVLRLVHVCMAVEPLARIIKVILQSMPDLANVMALILFFMLVFSVFGVTLFGAFVPKHFQNMGVALYTLFICITQDGWLDIYTDFQMDEREYAMEVGGAIYFAVFITLGAFIGLNLFVVVVTTNLEQMMKTGEEEGHLNIKFTETEEDEDWTDELPLVHCTEARKDTSTVPKEPLVGGPLSNLTEKTCDNFCLVLEAIQENLMEYKEIREELNMIVEEVSSIRFNQEQQNVILHKYTSKSATFLSEPPEGANKQDLITALVSREKVSDSNINMVNKHKFSH.

The Cytoplasmic segment spans residues 1-66 (MSEKHKWWQQ…TQMYIKQLLR (66 aa)). A helical transmembrane segment spans residues 67–88 (HPAFQLLLAFLLLSNAITIALR). The Extracellular segment spans residues 89 to 98 (TNSYLGQKHY). Residues 99–125 (ELFSTIDDIVLTILICEVLLGWLNGFW) form a helical membrane-spanning segment. Topologically, residues 126–129 (IFWK) are cytoplasmic. Residues 130–153 (DGWNILNFAIVFILFMGFFIKQLD) traverse the membrane as a helical segment. The Extracellular segment spans residues 154 to 156 (MVA). A helical membrane pass occupies residues 157–175 (ITYPLRVLRLVHVCMAVEP). The Cytoplasmic portion of the chain corresponds to 176–188 (LARIIKVILQSMP). A helical membrane pass occupies residues 189 to 212 (DLANVMALILFFMLVFSVFGVTLF). The Extracellular segment spans residues 213-222 (GAFVPKHFQN). The helical; Pore-forming intramembrane region spans 223-234 (MGVALYTLFICI). At 235-255 (TQDGWLDIYTDFQMDEREYAM) the chain is on the extracellular side. A helical transmembrane segment spans residues 256–283 (EVGGAIYFAVFITLGAFIGLNLFVVVVT). The Cytoplasmic segment spans residues 284–442 (TNLEQMMKTG…NMVNKHKFSH (159 aa)).

It belongs to the cation channel sperm-associated (TC 1.A.1.19) family. Component of the CatSper complex or CatSpermasome composed of the core pore-forming members CATSPER1, CATSPER2, CATSPER3 and CATSPER4 as well as auxiliary members CATSPERB, CATSPERG2, CATSPERD, CATSPERE, CATSPERZ, C2CD6/CATSPERT, SLCO6C1, TMEM249, TMEM262 and EFCAB9. HSPA1 may be an additional auxiliary complex member. The core complex members CATSPER1, CATSPER2, CATSPER3 and CATSPER4 form a heterotetrameric channel. The auxiliary CATSPERB, CATSPERG2, CATSPERD and CATSPERE subunits form a pavilion-like structure over the pore which stabilizes the complex through interactions with CATSPER4, CATSPER3, CATSPER1 and CATSPER2 respectively. SLCO6C1 interacts with CATSPERE and TMEM262/CATSPERH interacts with CATSPERB, further stabilizing the complex. C2CD6/CATSPERT interacts at least with CATSPERD and is required for targeting the CatSper complex in the flagellar membrane. In terms of tissue distribution, testis-specific.

It localises to the cell projection. Its subcellular location is the cilium. The protein resides in the flagellum membrane. The catalysed reaction is Ca(2+)(in) = Ca(2+)(out). With respect to regulation, in contrast to the human ortholog, not activated by progesterone. Activated by intracellular alkalinization. In terms of biological role, pore-forming subunit of the CatSper complex, a sperm-specific voltage-gated calcium channel that plays a central role in sperm cell hyperactivation. Controls calcium entry to mediate the hyperactivated motility, a step needed for sperm motility which is essential late in the preparation of sperm for fertilization. This is Cation channel sperm-associated protein 4 (Catsper4) from Mus musculus (Mouse).